The following is a 188-amino-acid chain: Capsid protein (188 aa).

The protein belongs to the tymoviruses capsid protein family.

The protein localises to the virion. Its function is as follows. Self-assembles to form a T=3 icosahedral capsid composed of 180 copies of the capsid protein. The capsid encapsulates the single-stranded RNA genome. The protein is Capsid protein of Theobroma cacao (Cacao).